The chain runs to 310 residues: Aspartate carbamoyltransferase catalytic subunit (310 aa).

2 residues coordinate carbamoyl phosphate: Arg57 and Thr58. Lys86 is a binding site for L-aspartate. Carbamoyl phosphate-binding residues include Arg107, His135, and Gln138. L-aspartate is bound by residues Arg168 and Arg229. Leu268 and Pro269 together coordinate carbamoyl phosphate.

It belongs to the aspartate/ornithine carbamoyltransferase superfamily. ATCase family. Heterooligomer of catalytic and regulatory chains.

The catalysed reaction is carbamoyl phosphate + L-aspartate = N-carbamoyl-L-aspartate + phosphate + H(+). The protein operates within pyrimidine metabolism; UMP biosynthesis via de novo pathway; (S)-dihydroorotate from bicarbonate: step 2/3. In terms of biological role, catalyzes the condensation of carbamoyl phosphate and aspartate to form carbamoyl aspartate and inorganic phosphate, the committed step in the de novo pyrimidine nucleotide biosynthesis pathway. This is Aspartate carbamoyltransferase catalytic subunit from Thermococcus kodakarensis (strain ATCC BAA-918 / JCM 12380 / KOD1) (Pyrococcus kodakaraensis (strain KOD1)).